The following is a 340-amino-acid chain: Probable sugar phosphate/phosphate translocator At3g14410 (340 aa).

The next 10 membrane-spanning stretches (helical) occupy residues 12 to 32, 44 to 64, 80 to 100, 110 to 130, 141 to 161, 163 to 183, 197 to 217, 234 to 254, 260 to 282, and 286 to 305; these read EFVT…QIFF, FPYP…LCFL, LEIY…TLWL, VAFA…LGVA, LLIM…ELNI, WIGV…LIFM, ISLM…PWIF, VVLT…FLVI, LTIR…LLFA, and LTII…AAYN. The segment at 320–340 is disordered; that stretch reads ETPGDAESIPLVSQGNTNTER. The span at 330-340 shows a compositional bias: polar residues; the sequence is LVSQGNTNTER.

The protein belongs to the TPT transporter family. TPT (TC 2.A.7.9) subfamily.

It localises to the membrane. This chain is Probable sugar phosphate/phosphate translocator At3g14410, found in Arabidopsis thaliana (Mouse-ear cress).